Consider the following 216-residue polypeptide: Urease accessory protein UreG (216 aa).

25–32 (GPVGSGKT) is a GTP binding site.

It belongs to the SIMIBI class G3E GTPase family. UreG subfamily. Homodimer. UreD, UreF and UreG form a complex that acts as a GTP-hydrolysis-dependent molecular chaperone, activating the urease apoprotein by helping to assemble the nickel containing metallocenter of UreC. The UreE protein probably delivers the nickel.

The protein resides in the cytoplasm. Functionally, facilitates the functional incorporation of the urease nickel metallocenter. This process requires GTP hydrolysis, probably effectuated by UreG. This chain is Urease accessory protein UreG, found in Burkholderia pseudomallei (strain 1710b).